The following is a 109-amino-acid chain: Elongin-C (109 aa).

The protein belongs to the SKP1 family.

Its subcellular location is the nucleus. In terms of biological role, SIII, also known as elongin, is a general transcription elongation factor that increases the RNA polymerase II transcription elongation past template-encoded arresting sites. Subunit A is transcriptionally active and its transcription activity is strongly enhanced by binding to the dimeric complex of the SIII regulatory subunits B and C (elongin BC complex). Its function is as follows. The elongin BC complex seems to be involved as an adapter protein in the proteasomal degradation of target proteins via different E3 ubiquitin ligase complexes. The sequence is that of Elongin-C (tceb1) from Dictyostelium discoideum (Social amoeba).